A 175-amino-acid chain; its full sequence is Alpha-crystallin B chain (175 aa).

N-acetylmethionine is present on Met1. Ser19 bears the Phosphoserine mark. O-linked (GlcNAc) serine glycosylation is present at Ser41. Phosphoserine occurs at positions 45 and 59. Positions 56–164 constitute a sHSP domain; the sequence is RAPSWIDTGL…PERTIPITRE (109 aa). His83 lines the Zn(2+) pocket. Lys92 is subject to N6-acetyllysine. Zn(2+)-binding residues include His104, Glu106, His111, and His119. Positions 142–175 are disordered; it reads VLTVNGPRRQASGPERTIPITREEKPAVTAAPKK. Lys166 bears the N6-acetyllysine mark. Thr170 is a glycosylation site (O-linked (GlcNAc) threonine).

The protein belongs to the small heat shock protein (HSP20) family. In terms of assembly, heteromer composed of three CRYAA and one CRYAB subunits. Aggregates with homologous proteins, including the small heat shock protein HSPB1, to form large heteromeric complexes. Inter-subunit bridging via zinc ions enhances stability, which is crucial as there is no protein turn over in the lens. Interacts with HSPBAP1 and TTN/titin. Interacts with TMEM109; in the cellular response to DNA damage. Interacts with DES; binds rapidly during early stages of DES filament assembly and a reduced binding seen in the later stages. Interacts with TMED10; the interaction mediates the translocation from the cytoplasm into the ERGIC (endoplasmic reticulum-Golgi intermediate compartment) and thereby secretion. Interacts with ATP6V1A and with MTOR, forming a ternary complex.

The protein resides in the cytoplasm. The protein localises to the nucleus. It localises to the secreted. Its subcellular location is the lysosome. Its function is as follows. May contribute to the transparency and refractive index of the lens. Has chaperone-like activity, preventing aggregation of various proteins under a wide range of stress conditions. In lens epithelial cells, stabilizes the ATP6V1A protein, preventing its degradation by the proteasome. The polypeptide is Alpha-crystallin B chain (CRYAB) (Sus scrofa (Pig)).